The chain runs to 415 residues: WD repeat-containing protein JIP5 (415 aa).

5 WD repeats span residues 5–44 (DVGS…KEQA), 104–142 (AHDS…CVRE), 145–184 (QHFD…PEPF), 189–228 (DQDD…GDCV), and 233–282 (GHPL…VVAD). The disordered stretch occupies residues 328–415 (GALGVTNENE…DVENAFFDEL (88 aa)). Residues 337 to 346 (EQSDEDEEMD) are compositionally biased toward acidic residues. The span at 358-367 (DGSGSSSSGE) shows a compositional bias: low complexity. The segment covering 390–405 (EQKPLDVDKPKGRNEI) has biased composition (basic and acidic residues).

It belongs to the WD repeat WDR55 family.

Its subcellular location is the nucleus. It is found in the nucleolus. This chain is WD repeat-containing protein JIP5 (JIP5), found in Laccaria bicolor (strain S238N-H82 / ATCC MYA-4686) (Bicoloured deceiver).